A 136-amino-acid polypeptide reads, in one-letter code: Large-conductance mechanosensitive channel (136 aa).

2 helical membrane-spanning segments follow: residues 9–29 and 78–98; these read AFAV…GAAF and FIQT…GVKA.

Belongs to the MscL family. In terms of assembly, homopentamer.

The protein resides in the cell inner membrane. Functionally, channel that opens in response to stretch forces in the membrane lipid bilayer. May participate in the regulation of osmotic pressure changes within the cell. This Azotobacter vinelandii (strain DJ / ATCC BAA-1303) protein is Large-conductance mechanosensitive channel.